The chain runs to 214 residues: Ribonuclease HII (214 aa).

The RNase H type-2 domain occupies 18 to 208; it reads SRVVGVDEVG…SLLPSEAHLC (191 aa). A divalent metal cation contacts are provided by aspartate 24, glutamate 25, and aspartate 116.

The protein belongs to the RNase HII family. Mn(2+) is required as a cofactor. Mg(2+) serves as cofactor.

It is found in the cytoplasm. The enzyme catalyses Endonucleolytic cleavage to 5'-phosphomonoester.. In terms of biological role, endonuclease that specifically degrades the RNA of RNA-DNA hybrids. In Thermosynechococcus vestitus (strain NIES-2133 / IAM M-273 / BP-1), this protein is Ribonuclease HII.